Consider the following 152-residue polypeptide: SsrA-binding protein (152 aa).

It belongs to the SmpB family.

The protein resides in the cytoplasm. Its function is as follows. Required for rescue of stalled ribosomes mediated by trans-translation. Binds to transfer-messenger RNA (tmRNA), required for stable association of tmRNA with ribosomes. tmRNA and SmpB together mimic tRNA shape, replacing the anticodon stem-loop with SmpB. tmRNA is encoded by the ssrA gene; the 2 termini fold to resemble tRNA(Ala) and it encodes a 'tag peptide', a short internal open reading frame. During trans-translation Ala-aminoacylated tmRNA acts like a tRNA, entering the A-site of stalled ribosomes, displacing the stalled mRNA. The ribosome then switches to translate the ORF on the tmRNA; the nascent peptide is terminated with the 'tag peptide' encoded by the tmRNA and targeted for degradation. The ribosome is freed to recommence translation, which seems to be the essential function of trans-translation. This chain is SsrA-binding protein, found in Rickettsia canadensis (strain McKiel).